The chain runs to 599 residues: Elongation factor 4 (599 aa).

In terms of domain architecture, tr-type G spans 4–186 (SKIRNFSIIA…SIVEKVPAPK (183 aa)). GTP-binding positions include 16–21 (DHGKST) and 133–136 (NKVD).

Belongs to the TRAFAC class translation factor GTPase superfamily. Classic translation factor GTPase family. LepA subfamily.

Its subcellular location is the cell inner membrane. The enzyme catalyses GTP + H2O = GDP + phosphate + H(+). Its function is as follows. Required for accurate and efficient protein synthesis under certain stress conditions. May act as a fidelity factor of the translation reaction, by catalyzing a one-codon backward translocation of tRNAs on improperly translocated ribosomes. Back-translocation proceeds from a post-translocation (POST) complex to a pre-translocation (PRE) complex, thus giving elongation factor G a second chance to translocate the tRNAs correctly. Binds to ribosomes in a GTP-dependent manner. The chain is Elongation factor 4 from Syntrophotalea carbinolica (strain DSM 2380 / NBRC 103641 / GraBd1) (Pelobacter carbinolicus).